We begin with the raw amino-acid sequence, 61 residues long: Conotoxin LiC32 (61 aa).

A signal peptide spans 1-22 (MRCVPVFIILLLLSPSAPSVDA). The propeptide occupies 23-44 (HPKTKDDVPLASFHDDAKRTLQ). Cysteine amide is present on cysteine 60.

The protein belongs to the conotoxin T superfamily. In terms of processing, contains 2 disulfide bonds that can be either 'C1-C3, C2-C4' or 'C1-C4, C2-C3', since these disulfide connectivities have been observed for conotoxins with cysteine framework V (for examples, see AC P0DQQ7 and AC P81755). Expressed by the venom duct.

It localises to the secreted. Its function is as follows. Has the ability to interact with the G-protein coupled somatostatin type 3 receptor (SSTR3). The ability was measured in competition binding experiments and the constant of inhibition (Ki) has been evaluated to be 3.5 uM. In Conus lividus (Livid cone), this protein is Conotoxin LiC32.